A 960-amino-acid chain; its full sequence is Protein mono-ADP-ribosyltransferase PARP10 (960 aa).

At E103 the chain carries ADP-ribosyl glutamic acid. A compositionally biased stretch (polar residues) spans 325–341 (SMGSTSPVDPVESSTEL). A disordered region spans residues 325 to 346 (SMGSTSPVDPVESSTELPEQVG). 2 positions are modified to phosphoserine: S381 and S388. A disordered region spans residues 553-576 (SPHGGEDRVPLEMEKEKPGGPGET). Residues 555–570 (HGGEDRVPLEMEKEKP) are compositionally biased toward basic and acidic residues. Positions 604-621 (LEEEATLQLAIHRSLESQ) match the Ubiquitin-interacting motif. A Phosphoserine modification is found at S617. The segment at 649–856 (DEDTGGEAQL…CAHGFNRSFC (208 aa)) is myc binding. A PARP catalytic domain is found at 755 to 960 (PNLSEQGLKE…TCKNILPGTP (206 aa)). A PIP-box motif is present at residues 780-787 (QDVVRAFY). Residue E831 is modified to ADP-ribosyl glutamic acid.

This sequence belongs to the ARTD/PARP family. Interacts with MYC. Interacts with PARP14. Interacts (via-PIP box and ubiquitin-interacting motifs) with PCNA. In terms of processing, stimulated through its phosphorylation by CDK2. Acquires CDK-dependent phosphorylation through late-G1 to S phase, and from prometaphase to cytokinesis in the nucleolar organizing regions. Phosphorylation is suppressed in growth-arrested cells. Auto-mono-ADP-ribosylated on glutamate and lysine residues.

The protein localises to the cytoplasm. It localises to the nucleus. It catalyses the reaction L-lysyl-[protein] + NAD(+) = N(6)-(ADP-D-ribosyl)-L-lysyl-[protein] + nicotinamide + H(+). The enzyme catalyses L-aspartyl-[protein] + NAD(+) = 4-O-(ADP-D-ribosyl)-L-aspartyl-[protein] + nicotinamide. The catalysed reaction is L-glutamyl-[protein] + NAD(+) = 5-O-(ADP-D-ribosyl)-L-glutamyl-[protein] + nicotinamide. Its function is as follows. ADP-ribosyltransferase that mediates mono-ADP-ribosylation of glutamate and aspartate residues on target proteins. In contrast to PARP1 and PARP2, it is not able to mediate poly-ADP-ribosylation. Catalyzes mono-ADP-ribosylation of GSK3B, leading to negatively regulate GSK3B kinase activity. Involved in translesion DNA synthesis in response to DNA damage via its interaction with PCNA. The polypeptide is Protein mono-ADP-ribosyltransferase PARP10 (Mus musculus (Mouse)).